Here is a 588-residue protein sequence, read N- to C-terminus: Ribonuclease Y (588 aa).

A helical transmembrane segment spans residues 7–27 (VLLVAVLLLTVVVVGAVLVGV). Residues 278–359 (VVSVLHLPGD…HRIEEVHDLA (82 aa)) enclose the KH domain. In terms of domain architecture, HD spans 404-497 (VLKHLVESAH…TQASDACSGG (94 aa)).

This sequence belongs to the RNase Y family.

The protein resides in the cell membrane. In terms of biological role, endoribonuclease that initiates mRNA decay. In Salinispora tropica (strain ATCC BAA-916 / DSM 44818 / JCM 13857 / NBRC 105044 / CNB-440), this protein is Ribonuclease Y.